The sequence spans 460 residues: tRNA-splicing endonuclease subunit Sen2 (460 aa).

The disordered stretch occupies residues 143–215 (EKEETPQHEP…SPSSHNGHVA (73 aa)). Positions 159–170 (SSLEGRVEKDEL) are enriched in basic and acidic residues. Residues Tyr364 and His372 contribute to the active site. 3 positions are modified to phosphoserine: Ser403, Ser406, and Ser410. The active site involves Lys411.

It belongs to the tRNA-intron endonuclease family. TRNA splicing endonuclease is a heterotetramer composed of TSEN2, TSEN15, TSEN34/LENG5 and TSEN54. tRNA splicing endonuclease complex also contains proteins of the pre-mRNA 3'-end processing machinery such as CLP1, CPSF1, CPSF4 and CSTF2.

The protein localises to the nucleus. The protein resides in the nucleolus. The enzyme catalyses pretRNA = a 3'-half-tRNA molecule with a 5'-OH end + a 5'-half-tRNA molecule with a 2',3'-cyclic phosphate end + an intron with a 2',3'-cyclic phosphate and a 5'-hydroxyl terminus.. Functionally, constitutes one of the two catalytic subunit of the tRNA-splicing endonuclease complex, a complex responsible for identification and cleavage of the splice sites in pre-tRNA. It cleaves pre-tRNA at the 5'- and 3'-splice sites to release the intron. The products are an intron and two tRNA half-molecules bearing 2',3'-cyclic phosphate and 5'-OH termini. There are no conserved sequences at the splice sites, but the intron is invariably located at the same site in the gene, placing the splice sites an invariant distance from the constant structural features of the tRNA body. Probably carries the active site for 5'-splice site cleavage. The tRNA splicing endonuclease is also involved in mRNA processing via its association with pre-mRNA 3'-end processing factors, establishing a link between pre-tRNA splicing and pre-mRNA 3'-end formation, suggesting that the endonuclease subunits function in multiple RNA-processing events. The chain is tRNA-splicing endonuclease subunit Sen2 (Tsen2) from Mus musculus (Mouse).